Consider the following 264-residue polypeptide: tRNA (guanine-N(1)-)-methyltransferase (264 aa).

S-adenosyl-L-methionine contacts are provided by residues Gly-116 and 136-141 (VGDFVL).

The protein belongs to the RNA methyltransferase TrmD family. In terms of assembly, homodimer.

The protein localises to the cytoplasm. It catalyses the reaction guanosine(37) in tRNA + S-adenosyl-L-methionine = N(1)-methylguanosine(37) in tRNA + S-adenosyl-L-homocysteine + H(+). Specifically methylates guanosine-37 in various tRNAs. In Koribacter versatilis (strain Ellin345), this protein is tRNA (guanine-N(1)-)-methyltransferase.